A 468-amino-acid polypeptide reads, in one-letter code: MSSSLWLQCLQQLQEELPATEFSMWVRPLQAELNDNTLTLFAPNRFVLDWVRDKYLNSINRLLQEYCGNDVPSLRFEVGSRPVAAPKPAPTRTPADVAAESSAPAQLQARKPVHKTWDDDAQAIADINHRSNVNPKHKFNNFVEGKSNQLGLAAARQVSDNPGAAYNPLFLYGGTGLGKTHLLHAVGNAIVDNNPNAKVVYMHSERFVQDMVKALQNNAIEEFKRYYRSVDALLIDDIQFFANKERSQEEFFHTFNALLEGNQQIILTSDRYPKEISGVEDRLKSRFGWGLTVAIEPPELETRVAILMKKAEDHQIHLADEVAFFIAKRLRSNVRELEGALNRVIANANFTGRPITIDFVREALRDLLALQEKLVTIDNIQKTVAEYYKIKVADLLSKRRSRSVARPRQLAMALAKELTNHSLPEIGDAFGGRDHTTVLHACRKIEQLREESHDIKEDYSNLIRTLSS.

Residues 1–84 form a domain I, interacts with DnaA modulators region; the sequence is MSSSLWLQCL…RFEVGSRPVA (84 aa). A disordered region spans residues 81–104; the sequence is RPVAAPKPAPTRTPADVAAESSAP. Residues 84–131 form a domain II region; that stretch reads AAPKPAPTRTPADVAAESSAPAQLQARKPVHKTWDDDAQAIADINHRS. The domain III, AAA+ region stretch occupies residues 132 to 348; the sequence is NVNPKHKFNN…GALNRVIANA (217 aa). Residues Gly176, Gly178, Lys179, and Thr180 each contribute to the ATP site. Residues 349–468 form a domain IV, binds dsDNA region; the sequence is NFTGRPITID…YSNLIRTLSS (120 aa).

The protein belongs to the DnaA family. In terms of assembly, oligomerizes as a right-handed, spiral filament on DNA at oriC.

It is found in the cytoplasm. Its function is as follows. Plays an essential role in the initiation and regulation of chromosomal replication. ATP-DnaA binds to the origin of replication (oriC) to initiate formation of the DNA replication initiation complex once per cell cycle. Binds the DnaA box (a 9 base pair repeat at the origin) and separates the double-stranded (ds)DNA. Forms a right-handed helical filament on oriC DNA; dsDNA binds to the exterior of the filament while single-stranded (ss)DNA is stabiized in the filament's interior. The ATP-DnaA-oriC complex binds and stabilizes one strand of the AT-rich DNA unwinding element (DUE), permitting loading of DNA polymerase. After initiation quickly degrades to an ADP-DnaA complex that is not apt for DNA replication. Binds acidic phospholipids. This Vibrio campbellii (strain ATCC BAA-1116) protein is Chromosomal replication initiator protein DnaA.